A 356-amino-acid polypeptide reads, in one-letter code: UDP-N-acetylglucosamine--N-acetylmuramyl-(pentapeptide) pyrophosphoryl-undecaprenol N-acetylglucosamine transferase (356 aa).

Residues 12–14 (SGG), N120, R163, S187, and Q286 contribute to the UDP-N-acetyl-alpha-D-glucosamine site.

Belongs to the glycosyltransferase 28 family. MurG subfamily.

The protein resides in the cell inner membrane. The enzyme catalyses di-trans,octa-cis-undecaprenyl diphospho-N-acetyl-alpha-D-muramoyl-L-alanyl-D-glutamyl-meso-2,6-diaminopimeloyl-D-alanyl-D-alanine + UDP-N-acetyl-alpha-D-glucosamine = di-trans,octa-cis-undecaprenyl diphospho-[N-acetyl-alpha-D-glucosaminyl-(1-&gt;4)]-N-acetyl-alpha-D-muramoyl-L-alanyl-D-glutamyl-meso-2,6-diaminopimeloyl-D-alanyl-D-alanine + UDP + H(+). The protein operates within cell wall biogenesis; peptidoglycan biosynthesis. Its function is as follows. Cell wall formation. Catalyzes the transfer of a GlcNAc subunit on undecaprenyl-pyrophosphoryl-MurNAc-pentapeptide (lipid intermediate I) to form undecaprenyl-pyrophosphoryl-MurNAc-(pentapeptide)GlcNAc (lipid intermediate II). This is UDP-N-acetylglucosamine--N-acetylmuramyl-(pentapeptide) pyrophosphoryl-undecaprenol N-acetylglucosamine transferase from Pelagibacter ubique (strain HTCC1062).